A 184-amino-acid chain; its full sequence is Large ribosomal subunit protein uL6 (184 aa).

It belongs to the universal ribosomal protein uL6 family. Part of the 50S ribosomal subunit.

In terms of biological role, this protein binds to the 23S rRNA, and is important in its secondary structure. It is located near the subunit interface in the base of the L7/L12 stalk, and near the tRNA binding site of the peptidyltransferase center. In Desulfurococcus amylolyticus (strain DSM 18924 / JCM 16383 / VKM B-2413 / 1221n) (Desulfurococcus kamchatkensis), this protein is Large ribosomal subunit protein uL6.